The primary structure comprises 61 residues: Large ribosomal subunit protein uL30 (61 aa).

This sequence belongs to the universal ribosomal protein uL30 family. Part of the 50S ribosomal subunit.

This is Large ribosomal subunit protein uL30 from Legionella pneumophila (strain Paris).